Consider the following 120-residue polypeptide: Large ribosomal subunit protein bL19 (120 aa).

This sequence belongs to the bacterial ribosomal protein bL19 family.

Its function is as follows. This protein is located at the 30S-50S ribosomal subunit interface and may play a role in the structure and function of the aminoacyl-tRNA binding site. This is Large ribosomal subunit protein bL19 from Chlorobium phaeobacteroides (strain DSM 266 / SMG 266 / 2430).